Consider the following 475-residue polypeptide: Ankyrin repeat, SAM and basic leucine zipper domain-containing protein 1 (475 aa).

Residues 1–24 (MAAGPLRGLAVAGGGESSESEDDG) form a disordered region. Phosphoserine is present on residues Ser17, Ser18, and Ser20. ANK repeat units follow at residues 45-74 (ERQE…SVDT), 78-107 (YGWT…NASF), 110-144 (DKQT…DPNV), 148-177 (RLMT…EVNT), 181-210 (NGYT…NKMI), and 214-243 (DGKT…PLEG). The region spanning 272–334 (SYTAFGDLEI…KIMAALKELE (63 aa)) is the SAM domain.

In terms of assembly, interacts with DDX4, PIWIL1, RANBP9 and TDRD1.

The protein resides in the cytoplasm. Plays a central role during spermatogenesis by repressing transposable elements and preventing their mobilization, which is essential for the germline integrity. Acts via the piRNA metabolic process, which mediates the repression of transposable elements during meiosis by forming complexes composed of piRNAs and Piwi proteins and governs the methylation and subsequent repression of transposons. Its association with pi-bodies suggests a participation in the primary piRNAs metabolic process. Required prior to the pachytene stage to facilitate the production of multiple types of piRNAs, including those associated with repeats involved in the regulation of retrotransposons. May act by mediating protein-protein interactions during germ cell maturation. The polypeptide is Ankyrin repeat, SAM and basic leucine zipper domain-containing protein 1 (ASZ1) (Ovis aries (Sheep)).